The following is a 202-amino-acid chain: Recombination protein RecR (202 aa).

The segment at 56–71 (CVVCGTVSDGELCRIC) adopts a C4-type zinc-finger fold. The Toprim domain maps to 79-179 (TMICVVEEPK…TVTRLASGLP (101 aa)).

It belongs to the RecR family.

In terms of biological role, may play a role in DNA repair. It seems to be involved in an RecBC-independent recombinational process of DNA repair. It may act with RecF and RecO. The chain is Recombination protein RecR from Nocardia farcinica (strain IFM 10152).